Reading from the N-terminus, the 76-residue chain is UPF0346 protein lhv_1069 (76 aa).

It belongs to the UPF0346 family.

The protein is UPF0346 protein lhv_1069 of Lactobacillus helveticus (strain DPC 4571).